A 162-amino-acid chain; its full sequence is Universal stress protein MJ0577 (162 aa).

ATP contacts are provided by residues Pro11, Val41, 127–133, and 141–143; these read GSHGKTN and SVT.

The protein belongs to the universal stress protein A family. Homodimer. It depends on Mn(2+) as a cofactor.

Its subcellular location is the cytoplasm. This Methanocaldococcus jannaschii (strain ATCC 43067 / DSM 2661 / JAL-1 / JCM 10045 / NBRC 100440) (Methanococcus jannaschii) protein is Universal stress protein MJ0577.